The primary structure comprises 201 residues: Small ribosomal subunit protein uS4c (201 aa).

One can recognise an S4 RNA-binding domain in the interval 91–153; that stretch reads MRLDNIVFRL…NASKKIVETN (63 aa).

Belongs to the universal ribosomal protein uS4 family. In terms of assembly, part of the 30S ribosomal subunit. Contacts protein S5. The interaction surface between S4 and S5 is involved in control of translational fidelity.

It is found in the plastid. It localises to the cyanelle. Its function is as follows. One of the primary rRNA binding proteins, it binds directly to 16S rRNA where it nucleates assembly of the body of the 30S subunit. In terms of biological role, with S5 and S12 plays an important role in translational accuracy. This chain is Small ribosomal subunit protein uS4c (rps4), found in Cyanophora paradoxa.